The chain runs to 414 residues: Protein BTN1 (414 aa).

The signal sequence occupies residues 1–33; the sequence is MQLLIPESRIVFASFFIFGLLNNILYVVILSAA. A run of 5 helical transmembrane segments spans residues 48 to 68, 74 to 94, 100 to 120, 137 to 157, and 159 to 179; these read LADIIPSFTIKVMAPFFVGLI, IWMLVGLSSFGMLVISLTSDE, IVGICMASLSSGLGEVTFLQL, TGGAGLLGSFVFMLLTNMLGM, and VWVVLLLFAVLPLGFLMAFYV. A disordered region spans residues 195-214; that stretch reads EALDSLDERSDPSSNASFSS. 5 consecutive transmembrane segments (helical) span residues 242–262, 281–301, 306–326, 332–352, and 368–388; these read LCLVYVSEYIINQGISPTLLF, VYGFMYQLGVFVSRSSISFGI, LYLLSVLQFANVVITVYQSVH, SVWLLLALIFYEGLLGGFSYV, and EFSMGCVGISDTFGILLAGCI.

It belongs to the battenin family.

It is found in the vacuole membrane. Involved in vacuolar transport and vacuole pH homeostasis. Also required for cytokinesis. The protein is Protein BTN1 (BTN1) of Debaryomyces hansenii (strain ATCC 36239 / CBS 767 / BCRC 21394 / JCM 1990 / NBRC 0083 / IGC 2968) (Yeast).